Here is a 447-residue protein sequence, read N- to C-terminus: Phosphoglucosamine mutase (447 aa).

The Phosphoserine intermediate role is filled by serine 103. Mg(2+) contacts are provided by serine 103, aspartate 242, aspartate 244, and aspartate 246. The residue at position 103 (serine 103) is a Phosphoserine.

Belongs to the phosphohexose mutase family. Mg(2+) serves as cofactor. In terms of processing, activated by phosphorylation.

The catalysed reaction is alpha-D-glucosamine 1-phosphate = D-glucosamine 6-phosphate. Catalyzes the conversion of glucosamine-6-phosphate to glucosamine-1-phosphate. The protein is Phosphoglucosamine mutase of Cereibacter sphaeroides (strain ATCC 17023 / DSM 158 / JCM 6121 / CCUG 31486 / LMG 2827 / NBRC 12203 / NCIMB 8253 / ATH 2.4.1.) (Rhodobacter sphaeroides).